The following is a 478-amino-acid chain: E3 ubiquitin-protein ligase makorin-1 (478 aa).

3 consecutive C3H1-type zinc fingers follow at residues 51 to 78, 80 to 107, and 204 to 231; these read WTKQ…HDLS, SQSA…HTKP, and EMKK…HGDA. Residues 232–259 form a makorin-type Cys-His region; the sequence is CDMCGLQVLHPVDAAQRSQHIKSCIEAH. An RING-type zinc finger spans residues 277-331; that stretch reads CGICMEVVYEKANPSERRFGILSNCNHTYCLKCIRKWRSAKQFESKIIKSCPECR. The C3H1-type 4 zinc finger occupies 360 to 389; sequence AMSNKPCRYFDEGRGSCPFGGNCFYKHAYP.

Interacts with p53/TP53 and CDKN1A. Interacts with TERT, modulating telomere length homeostasis. Post-translationally, auto-ubiquitinated; which leads to proteasomal degradation.

The catalysed reaction is S-ubiquitinyl-[E2 ubiquitin-conjugating enzyme]-L-cysteine + [acceptor protein]-L-lysine = [E2 ubiquitin-conjugating enzyme]-L-cysteine + N(6)-ubiquitinyl-[acceptor protein]-L-lysine.. Its pathway is protein modification; protein ubiquitination. In terms of biological role, E3 ubiquitin ligase catalyzing the covalent attachment of ubiquitin moieties onto substrate proteins. These substrates include FILIP1, p53/TP53, CDKN1A and TERT. Keeps cells alive by suppressing p53/TP53 under normal conditions, but stimulates apoptosis by repressing CDKN1A under stress conditions. Acts as a negative regulator of telomerase. Has negative and positive effects on RNA polymerase II-dependent transcription. The chain is E3 ubiquitin-protein ligase makorin-1 (MKRN1) from Notamacropus eugenii (Tammar wallaby).